Consider the following 78-residue polypeptide: Magnetosome protein MamL (78 aa).

Residues 1–22 (MVRVIGSLVFGGLILLLASSNA) form the signal peptide. Topologically, residues 23–38 (HMVETRFGPLIMLAPH) are lumenal. A helical transmembrane segment spans residues 39 to 59 (FVVLGITFFLGFAIGIVLVFA). The Cytoplasmic segment spans residues 60 to 78 (NVMKRRKHKLPGKNIVIKR).

It belongs to the magnetosome MamL family.

The protein localises to the magnetosome membrane. In terms of biological role, involved in magnetite crystal maturation, but not in magnetosome vesicle tubulation or formation. One of 7 genes (mamLQBIEMO) able to induce magnetosome membrane biogenesis; coexpression of mamLQRBIEMO in a deletion of the 17 gene mamAB operon restores magnetosome vesicle formation but not magnetite biosynthesis. The polypeptide is Magnetosome protein MamL (Magnetospirillum gryphiswaldense (strain DSM 6361 / JCM 21280 / NBRC 15271 / MSR-1)).